Consider the following 520-residue polypeptide: GMP synthase [glutamine-hydrolyzing] (520 aa).

A Glutamine amidotransferase type-1 domain is found at 13–205; the sequence is KIIVLDYGSQ…ALNICKAKGD (193 aa). The active-site Nucleophile is the cysteine 90. Catalysis depends on residues histidine 179 and glutamate 181. In terms of domain architecture, GMPS ATP-PPase spans 206–395; it reads WSMDNFIDMQ…LGMPDHIVWR (190 aa). 233 to 239 is a binding site for ATP; the sequence is SGGVDSS.

Homodimer.

The catalysed reaction is XMP + L-glutamine + ATP + H2O = GMP + L-glutamate + AMP + diphosphate + 2 H(+). It participates in purine metabolism; GMP biosynthesis; GMP from XMP (L-Gln route): step 1/1. Functionally, catalyzes the synthesis of GMP from XMP. This chain is GMP synthase [glutamine-hydrolyzing], found in Streptococcus pneumoniae (strain ATCC 700669 / Spain 23F-1).